Here is a 393-residue protein sequence, read N- to C-terminus: Lipid-A-disaccharide synthase (393 aa).

The protein belongs to the LpxB family.

The catalysed reaction is a lipid X + a UDP-2-N,3-O-bis[(3R)-3-hydroxyacyl]-alpha-D-glucosamine = a lipid A disaccharide + UDP + H(+). It participates in bacterial outer membrane biogenesis; LPS lipid A biosynthesis. Condensation of UDP-2,3-diacylglucosamine and 2,3-diacylglucosamine-1-phosphate to form lipid A disaccharide, a precursor of lipid A, a phosphorylated glycolipid that anchors the lipopolysaccharide to the outer membrane of the cell. This is Lipid-A-disaccharide synthase from Actinobacillus pleuropneumoniae serotype 3 (strain JL03).